A 315-amino-acid polypeptide reads, in one-letter code: HTH-type transcriptional regulator TreR (315 aa).

The region spanning 5-59 (LTIKDIARLSGVGKSTVSRVLNNESGVSERTRERVEAVMNQHGFSPSRSARAMRG) is the HTH lacI-type domain. A DNA-binding region (H-T-H motif) is located at residues 7–26 (IKDIARLSGVGKSTVSRVLN). Alpha,alpha-trehalose 6-phosphate-binding positions include 71–77 (RLDSLSE), glycine 126, arginine 147, 187–190 (DITT), arginine 194, threonine 242, and tyrosine 284.

In terms of assembly, homodimer.

In terms of biological role, repressor of the treBC operon. It is able to bind trehalose-6-phosphate. The chain is HTH-type transcriptional regulator TreR (treR) from Salmonella typhimurium (strain LT2 / SGSC1412 / ATCC 700720).